Here is a 229-residue protein sequence, read N- to C-terminus: Flagellar L-ring protein (229 aa).

The first 23 residues, 1 to 23 (MNPLTRVALAVAAFAALVLALSA), serve as a signal peptide directing secretion. Residue Cys-24 is the site of N-palmitoyl cysteine attachment. Residue Cys-24 is the site of S-diacylglycerol cysteine attachment.

It belongs to the FlgH family. As to quaternary structure, the basal body constitutes a major portion of the flagellar organelle and consists of four rings (L,P,S, and M) mounted on a central rod.

The protein resides in the cell outer membrane. It is found in the bacterial flagellum basal body. Its function is as follows. Assembles around the rod to form the L-ring and probably protects the motor/basal body from shearing forces during rotation. The sequence is that of Flagellar L-ring protein from Anaeromyxobacter sp. (strain K).